A 234-amino-acid chain; its full sequence is Probable ascorbate-specific transmembrane electron transporter 1 (234 aa).

At 1-9 (MGLGVRAAP) the chain is on the cytoplasmic side. The helical transmembrane segment at 10–30 (FTYVAHALAVAAATMVLVWCI) threads the bilayer. Residues 13-217 (VAHALAVAAA…FGASVVVAAV (205 aa)) form the Cytochrome b561 domain. Residues 31-48 (HFRGGLAFEATNKNLIFN) lie on the Extracellular side of the membrane. Residues 49 to 69 (VHPVLMLIGYIILGSEAIMVY) form a helical membrane-spanning segment. Position 50 (H50) interacts with heme b. 65-73 (AIMVYKVLP) contacts L-ascorbate. Residues 70 to 82 (KVLPTWKHDTTKL) lie on the Cytoplasmic side of the membrane. The helical transmembrane segment at 83–103 (IHLILHAIALVFGAVGIYCAF) threads the bilayer. Residues H84 and H118 each contribute to the heme b site. The Extracellular segment spans residues 104-121 (KFHNESGIANLYSLHSWL). 114–123 (LYSLHSWLGI) serves as a coordination point for monodehydro-L-ascorbate radical. The chain crosses the membrane as a helical span at residues 122–142 (GIGTICLYGIQWIFGFVAFFF). The Cytoplasmic segment spans residues 143 to 151 (PRASPSVRK). Residues 152–172 (GVLPWHILFGLFVYILALATA) form a helical membrane-spanning segment. H157 is a binding site for heme b. The Extracellular segment spans residues 173–194 (ELGFLEKLTFLQSSGLDKYGAE). Residues 195–215 (AFLVNFTALIVVLFGASVVVA) traverse the membrane as a helical segment. At 216 to 234 (AVSPARVEEPHEYAPIPES) the chain is on the cytoplasmic side.

The cofactor is heme b.

It is found in the membrane. Its function is as follows. Two-heme-containing cytochrome. Catalyzes ascorbate-dependent trans-membrane electron transfer by utilizing a concerted H(+)/e(-) transfer mechanism. The polypeptide is Probable ascorbate-specific transmembrane electron transporter 1 (Oryza sativa subsp. japonica (Rice)).